Consider the following 623-residue polypeptide: Aspartate--tRNA(Asp/Asn) ligase (623 aa).

Glutamate 175 provides a ligand contact to L-aspartate. Residues glutamine 199 to lysine 202 are aspartate. Positions 221 and 455 each coordinate L-aspartate. ATP is bound at residue arginine 221–glutamate 223. Glutamate 517 contacts ATP. Arginine 524 serves as a coordination point for L-aspartate. Residue glycine 569–arginine 572 coordinates ATP.

The protein belongs to the class-II aminoacyl-tRNA synthetase family. Type 1 subfamily. Homodimer.

The protein resides in the cytoplasm. It carries out the reaction tRNA(Asx) + L-aspartate + ATP = L-aspartyl-tRNA(Asx) + AMP + diphosphate. Functionally, aspartyl-tRNA synthetase with relaxed tRNA specificity since it is able to aspartylate not only its cognate tRNA(Asp) but also tRNA(Asn). Reaction proceeds in two steps: L-aspartate is first activated by ATP to form Asp-AMP and then transferred to the acceptor end of tRNA(Asp/Asn). This is Aspartate--tRNA(Asp/Asn) ligase from Methylocella silvestris (strain DSM 15510 / CIP 108128 / LMG 27833 / NCIMB 13906 / BL2).